Here is a 341-residue protein sequence, read N- to C-terminus: MNNYLRKLVEGQHLTEEEMYKAGLLLLNENILESEIAAFLVLLKAKGETAEEIYGLVRALREKALPFSNHIQGAMDNCGTGGDGAQTFNISTTSAFVLAGADVKVAKHGNRAVSSKTGSADLLEELGVNISSTPNEIDYLLEHVGIAFLFAPVMHPALKRIMKIRKELNVPTIFNLIGPLTNPVNLETQFVGIYKRDMLLPVAQVLQKLGRKQALVVNGSGFLDEASLQGENHVVILKDNEIVETSIEPKKYGFSIVKNEEIRGGNSKENAKITLGVLSGEKSVYRDTVLFNAGLALFANGKAKTIEEGITLAAHSIDSGKALAKLNLLIAASNEKLERVN.

5-phospho-alpha-D-ribose 1-diphosphate-binding positions include Gly-79, 82–83, Thr-87, 89–92, 107–115, and Ser-119; these read GD, NIST, and KHGNRAVSS. Gly-79 contributes to the anthranilate binding site. Mg(2+) is bound at residue Ser-91. Anthranilate is bound at residue Asn-110. Arg-165 serves as a coordination point for anthranilate. 2 residues coordinate Mg(2+): Asp-224 and Glu-225.

The protein belongs to the anthranilate phosphoribosyltransferase family. As to quaternary structure, homodimer. Mg(2+) serves as cofactor.

The catalysed reaction is N-(5-phospho-beta-D-ribosyl)anthranilate + diphosphate = 5-phospho-alpha-D-ribose 1-diphosphate + anthranilate. The protein operates within amino-acid biosynthesis; L-tryptophan biosynthesis; L-tryptophan from chorismate: step 2/5. In terms of biological role, catalyzes the transfer of the phosphoribosyl group of 5-phosphorylribose-1-pyrophosphate (PRPP) to anthranilate to yield N-(5'-phosphoribosyl)-anthranilate (PRA). The sequence is that of Anthranilate phosphoribosyltransferase from Bacillus cereus (strain ZK / E33L).